The sequence spans 1053 residues: Mediator of RNA polymerase II transcription subunit 16 (1053 aa).

Residues 139–170 (KTEGNTEKNKDTKQIGNGSGTNGHGDSPINTP) form a disordered region. The span at 142 to 151 (GNTEKNKDTK) shows a compositional bias: basic and acidic residues.

Belongs to the Mediator complex subunit 16 family. Component of the Mediator complex.

The protein resides in the nucleus. In terms of biological role, component of the Mediator complex, a coactivator involved in the regulated transcription of nearly all RNA polymerase II-dependent genes. Mediator functions as a bridge to convey information from gene-specific regulatory proteins to the basal RNA polymerase II transcription machinery. Mediator is recruited to promoters by direct interactions with regulatory proteins and serves as a scaffold for the assembly of a functional preinitiation complex with RNA polymerase II and the general transcription factors. This is Mediator of RNA polymerase II transcription subunit 16 (SIN4) from Candida albicans (strain SC5314 / ATCC MYA-2876) (Yeast).